Consider the following 346-residue polypeptide: Phosphoribosylformylglycinamidine cyclo-ligase (346 aa).

Belongs to the AIR synthase family.

Its subcellular location is the cytoplasm. The catalysed reaction is 2-formamido-N(1)-(5-O-phospho-beta-D-ribosyl)acetamidine + ATP = 5-amino-1-(5-phospho-beta-D-ribosyl)imidazole + ADP + phosphate + H(+). Its pathway is purine metabolism; IMP biosynthesis via de novo pathway; 5-amino-1-(5-phospho-D-ribosyl)imidazole from N(2)-formyl-N(1)-(5-phospho-D-ribosyl)glycinamide: step 2/2. The polypeptide is Phosphoribosylformylglycinamidine cyclo-ligase (Vibrio atlanticus (strain LGP32) (Vibrio splendidus (strain Mel32))).